The following is a 103-amino-acid chain: NADH-quinone oxidoreductase subunit K (103 aa).

The next 3 helical transmembrane spans lie at 5–25 (VPTS…LIGV), 32–52 (ILIF…LVAF), and 66–86 (FIVM…IVAI).

This sequence belongs to the complex I subunit 4L family. NDH-1 is composed of 15 different subunits. Subunits NuoA, H, J, K, L, M, N constitute the membrane sector of the complex.

It is found in the cell membrane. The enzyme catalyses a quinone + NADH + 5 H(+)(in) = a quinol + NAD(+) + 4 H(+)(out). NDH-1 shuttles electrons from NADH, via FMN and iron-sulfur (Fe-S) centers, to quinones in the respiratory chain. The immediate electron acceptor for the enzyme in this species is believed to be a menaquinone. Couples the redox reaction to proton translocation (for every two electrons transferred, four hydrogen ions are translocated across the cytoplasmic membrane), and thus conserves the redox energy in a proton gradient. The protein is NADH-quinone oxidoreductase subunit K of Deinococcus radiodurans (strain ATCC 13939 / DSM 20539 / JCM 16871 / CCUG 27074 / LMG 4051 / NBRC 15346 / NCIMB 9279 / VKM B-1422 / R1).